Consider the following 171-residue polypeptide: Probable DNA-directed RNA polymerase subunit delta (171 aa).

The HTH HARE-type domain occupies 14–81 (MALVEIAYEI…SDQTWGLRSW (68 aa)). Positions 138 to 171 (EFDEIDEADDDELDDLEDEILDDDEDFDEEEDEE) are disordered.

The protein belongs to the RpoE family. As to quaternary structure, RNAP is composed of a core of 2 alpha, a beta and a beta' subunits. The core is associated with a delta subunit and one of several sigma factors.

In terms of biological role, participates in both the initiation and recycling phases of transcription. In the presence of the delta subunit, RNAP displays an increased specificity of transcription, a decreased affinity for nucleic acids, and an increased efficiency of RNA synthesis because of enhanced recycling. The chain is Probable DNA-directed RNA polymerase subunit delta from Bacillus licheniformis (strain ATCC 14580 / DSM 13 / JCM 2505 / CCUG 7422 / NBRC 12200 / NCIMB 9375 / NCTC 10341 / NRRL NRS-1264 / Gibson 46).